Consider the following 543-residue polypeptide: Peptide chain release factor 3 (543 aa).

Residues K21–L289 form the tr-type G domain. Residues S30–T37, D98–H102, and N152–D155 contribute to the GTP site.

The protein belongs to the TRAFAC class translation factor GTPase superfamily. Classic translation factor GTPase family. PrfC subfamily.

The protein resides in the cytoplasm. Functionally, increases the formation of ribosomal termination complexes and stimulates activities of RF-1 and RF-2. It binds guanine nucleotides and has strong preference for UGA stop codons. It may interact directly with the ribosome. The stimulation of RF-1 and RF-2 is significantly reduced by GTP and GDP, but not by GMP. The sequence is that of Peptide chain release factor 3 from Thiobacillus denitrificans (strain ATCC 25259 / T1).